An 869-amino-acid polypeptide reads, in one-letter code: DNA mismatch repair protein MutS (869 aa).

624-631 (GPNMGGKS) contacts ATP.

This sequence belongs to the DNA mismatch repair MutS family.

This protein is involved in the repair of mismatches in DNA. It is possible that it carries out the mismatch recognition step. This protein has a weak ATPase activity. In Solibacter usitatus (strain Ellin6076), this protein is DNA mismatch repair protein MutS.